Consider the following 171-residue polypeptide: Adenine phosphoribosyltransferase (171 aa).

This sequence belongs to the purine/pyrimidine phosphoribosyltransferase family. In terms of assembly, homodimer.

It localises to the cytoplasm. It carries out the reaction AMP + diphosphate = 5-phospho-alpha-D-ribose 1-diphosphate + adenine. The protein operates within purine metabolism; AMP biosynthesis via salvage pathway; AMP from adenine: step 1/1. Functionally, catalyzes a salvage reaction resulting in the formation of AMP, that is energically less costly than de novo synthesis. This is Adenine phosphoribosyltransferase from Trichlorobacter lovleyi (strain ATCC BAA-1151 / DSM 17278 / SZ) (Geobacter lovleyi).